A 387-amino-acid chain; its full sequence is MDVLLGTEELEDELHQLHFNYTCVPSLGLSVARDAETAVNFLIVLVGGPMNFLVLATQMLSNRSYSVSTPTLYMTNLYLANLLTVATLPFLMLSNRGLVGSSPEGCKIAALAYYATCTAGFATLMLIAINRYRVIHQRTRSGAGSKRQTYAVLAVTWLASLMCASPAPLYATVMAHDSADALAFETCIIYFSYDQVKTVLATFKILITMIWGITPVVMMSWFYVFFYRRLKLTSYRRRSQTLTFVTTLMLSFLVVQTPFVAIMSYDSYGVLNWPINCDTINKRDAVSMLARVVPNFHCLLNPVLYAFLGRDFNKRFILCISGKLFSRRRALRERAGLGAQIVGPVCALPSKTVTLSEETRDLSQEIRRLRALGRPPPPPPPPPPPNC.

Over 1-33 (MDVLLGTEELEDELHQLHFNYTCVPSLGLSVAR) the chain is Extracellular. The N-linked (GlcNAc...) asparagine; by host glycan is linked to asparagine 20. Residues 34 to 61 (DAETAVNFLIVLVGGPMNFLVLATQMLS) form a helical membrane-spanning segment. Topologically, residues 62–71 (NRSYSVSTPT) are cytoplasmic. Residues 72-94 (LYMTNLYLANLLTVATLPFLMLS) traverse the membrane as a helical segment. Residues 95 to 107 (NRGLVGSSPEGCK) lie on the Extracellular side of the membrane. A helical transmembrane segment spans residues 108 to 129 (IAALAYYATCTAGFATLMLIAI). The Cytoplasmic portion of the chain corresponds to 130–150 (NRYRVIHQRTRSGAGSKRQTY). The chain crosses the membrane as a helical span at residues 151–169 (AVLAVTWLASLMCASPAPL). Residues 170 to 204 (YATVMAHDSADALAFETCIIYFSYDQVKTVLATFK) are Extracellular-facing. Residues 205 to 224 (ILITMIWGITPVVMMSWFYV) traverse the membrane as a helical segment. Over 225 to 244 (FFYRRLKLTSYRRRSQTLTF) the chain is Cytoplasmic. A helical transmembrane segment spans residues 245-268 (VTTLMLSFLVVQTPFVAIMSYDSY). Topologically, residues 269–285 (GVLNWPINCDTINKRDA) are extracellular. A helical transmembrane segment spans residues 286–309 (VSMLARVVPNFHCLLNPVLYAFLG). At 310-387 (RDFNKRFILC…PPPPPPPPNC (78 aa)) the chain is on the cytoplasmic side. The interval 368-387 (RLRALGRPPPPPPPPPPPNC) is disordered. Residues 374 to 387 (RPPPPPPPPPPPNC) show a composition bias toward pro residues.

It belongs to the G-protein coupled receptor 1 family.

It localises to the host cell membrane. Functionally, plays an important role in vivo, in particular in the dissemination to or replication in the salivary gland. The sequence is that of G-protein coupled receptor homolog R33 from Rattus.